The sequence spans 176 residues: tRNA (cytidine(56)-2'-O)-methyltransferase (176 aa).

Residues Leu86 and 111 to 115 (GAEKV) each bind S-adenosyl-L-methionine.

This sequence belongs to the aTrm56 family. Homodimer.

The protein resides in the cytoplasm. It carries out the reaction cytidine(56) in tRNA + S-adenosyl-L-methionine = 2'-O-methylcytidine(56) in tRNA + S-adenosyl-L-homocysteine + H(+). Its function is as follows. Specifically catalyzes the AdoMet-dependent 2'-O-ribose methylation of cytidine at position 56 in tRNAs. This chain is tRNA (cytidine(56)-2'-O)-methyltransferase, found in Methanoregula boonei (strain DSM 21154 / JCM 14090 / 6A8).